Reading from the N-terminus, the 381-residue chain is Succinyl-diaminopimelate desuccinylase (381 aa).

His-76 is a Zn(2+) binding site. Asp-78 is an active-site residue. Asp-107 is a Zn(2+) binding site. The active-site Proton acceptor is Glu-140. Positions 141, 169, and 354 each coordinate Zn(2+).

The protein belongs to the peptidase M20A family. DapE subfamily. Homodimer. Requires Zn(2+) as cofactor. Co(2+) serves as cofactor.

The enzyme catalyses N-succinyl-(2S,6S)-2,6-diaminopimelate + H2O = (2S,6S)-2,6-diaminopimelate + succinate. It participates in amino-acid biosynthesis; L-lysine biosynthesis via DAP pathway; LL-2,6-diaminopimelate from (S)-tetrahydrodipicolinate (succinylase route): step 3/3. Catalyzes the hydrolysis of N-succinyl-L,L-diaminopimelic acid (SDAP), forming succinate and LL-2,6-diaminopimelate (DAP), an intermediate involved in the bacterial biosynthesis of lysine and meso-diaminopimelic acid, an essential component of bacterial cell walls. This Gluconobacter oxydans (strain 621H) (Gluconobacter suboxydans) protein is Succinyl-diaminopimelate desuccinylase.